The chain runs to 80 residues: HssA/B-like protein 2 (80 aa).

Positions 1 to 29 (MSLLSALTSISKPMNTSSKSSVSSKNVSG) are disordered. Low complexity predominate over residues 9 to 29 (SISKPMNTSSKSSVSSKNVSG).

Belongs to the hssA/B family.

The protein is HssA/B-like protein 2 (hssl2) of Dictyostelium discoideum (Social amoeba).